A 291-amino-acid polypeptide reads, in one-letter code: Porphobilinogen deaminase (291 aa).

Residue Cys-238 is modified to S-(dipyrrolylmethanemethyl)cysteine.

It belongs to the HMBS family. Monomer. The cofactor is dipyrromethane.

It carries out the reaction 4 porphobilinogen + H2O = hydroxymethylbilane + 4 NH4(+). Its pathway is porphyrin-containing compound metabolism; protoporphyrin-IX biosynthesis; coproporphyrinogen-III from 5-aminolevulinate: step 2/4. Its function is as follows. Tetrapolymerization of the monopyrrole PBG into the hydroxymethylbilane pre-uroporphyrinogen in several discrete steps. This chain is Porphobilinogen deaminase, found in Clostridium beijerinckii (strain ATCC 51743 / NCIMB 8052) (Clostridium acetobutylicum).